The following is a 702-amino-acid chain: Methionine--tRNA ligase (702 aa).

The 'HIGH' region signature appears at 23-33 (PYANGPLHLGH). Positions 154, 157, 167, and 170 each coordinate Zn(2+). A 'KMSKS' region motif is present at residues 341-345 (KMSKS). Position 344 (Lys-344) interacts with ATP. A disordered region spans residues 562–593 (LAPPPASAKQQNASMSNTAPPPTAEEPETTAP). Polar residues predominate over residues 569-578 (AKQQNASMSN). The tRNA-binding domain occupies 599–702 (DFAKLDLRIG…SSAQPGMPVR (104 aa)).

The protein belongs to the class-I aminoacyl-tRNA synthetase family. MetG type 1 subfamily. As to quaternary structure, homodimer. Zn(2+) is required as a cofactor.

The protein localises to the cytoplasm. It carries out the reaction tRNA(Met) + L-methionine + ATP = L-methionyl-tRNA(Met) + AMP + diphosphate. In terms of biological role, is required not only for elongation of protein synthesis but also for the initiation of all mRNA translation through initiator tRNA(fMet) aminoacylation. This is Methionine--tRNA ligase from Xylella fastidiosa (strain M12).